Here is a 75-residue protein sequence, read N- to C-terminus: Penaeidin-3n (75 aa).

A signal peptide spans 1-19 (MRLVVCLVFLASFALVCQG). Residue Gln20 is modified to Pyrrolidone carboxylic acid. Disulfide bonds link Cys44–Cys59 and Cys48–Cys66. Residue Ser74 is modified to Serine amide.

Belongs to the penaeidin family.

It is found in the cytoplasmic granule. Its function is as follows. Antibacterial and antifungal activity. Presents chitin-binding activity. The protein is Penaeidin-3n of Penaeus setiferus (Atlantic white shrimp).